Reading from the N-terminus, the 312-residue chain is Transcription initiation factor IIB (312 aa).

The TFIIB-type zinc-finger motif lies at 10 to 42; it reads FVQTCSDCGETQNIVEDYKNGYHVCGRCGCIVG. Zn(2+) contacts are provided by Cys-14, Cys-17, Cys-34, and Cys-37. Repeat copies occupy residues 120-196 and 213-290.

This sequence belongs to the TFIIB family. As to quaternary structure, associates with TFIID-IIA (DA complex) to form TFIID-IIA-IIB (DAB-complex) which is then recognized by polymerase II.

It localises to the nucleus. In terms of biological role, general factor that plays a major role in the activation of eukaryotic genes transcribed by RNA polymerase II. This is Transcription initiation factor IIB from Encephalitozoon cuniculi (strain GB-M1) (Microsporidian parasite).